A 210-amino-acid chain; its full sequence is S-norcoclaurine synthase (210 aa).

The signal sequence occupies residues 1 to 19 (MMKMEVVFVFLMLLGTINC). 108 to 110 (YKE) serves as a coordination point for dopamine. Residue lysine 122 is the Proton donor of the active site. Aspartate 141 provides a ligand contact to (4-hydroxyphenyl)acetaldehyde.

The protein belongs to the BetVI family. Concentration-dependent dimerization, but mainly monomeric at concentrations around 10 uM. In terms of tissue distribution, expressed most abundantly in the rhizomes and to a lesser extent in petioles, roots, leaves and flower buds.

It carries out the reaction (4-hydroxyphenyl)acetaldehyde + dopamine = (S)-norcoclaurine + H2O. Functionally, involved in the biosynthesis of the common precursor of all benzylisoquinoline alkaloids such as morphine, sanguinarine, codeine or berberine. Condenses dopamine and 4-hydroxyphenylacetaldehyde. The protein is S-norcoclaurine synthase of Thalictrum flavum subsp. glaucum (Yellow meadow rue).